Reading from the N-terminus, the 208-residue chain is MSSQIKLTKNAYRLEKIKLARLETYLPTLKLKMALLQVEVANAVRESSASIQAYEEARESIYAFAELFSIPLYVDAIANSFKIEKVEKGYENITGVEVPVVKNIVLSESSYSVLDTPIWIDTLVAYSREFVINKVRSEVAREKQRILEEELRNVSIRVNLFEKKLIPETTRMIKKIAIFLSDRSITDVGQVKMAKKKIQQRKEESECA.

Belongs to the V-ATPase D subunit family.

Produces ATP from ADP in the presence of a proton gradient across the membrane. The polypeptide is V-type ATP synthase subunit D (Chlamydia felis (strain Fe/C-56) (Chlamydophila felis)).